Consider the following 183-residue polypeptide: Acireductone dioxygenase (183 aa).

Fe(2+)-binding residues include His-95, His-97, Glu-101, and His-139. 4 residues coordinate Ni(2+): His-95, His-97, Glu-101, and His-139.

This sequence belongs to the acireductone dioxygenase (ARD) family. In terms of assembly, monomer. Fe(2+) is required as a cofactor. It depends on Ni(2+) as a cofactor.

The catalysed reaction is 1,2-dihydroxy-5-(methylsulfanyl)pent-1-en-3-one + O2 = 3-(methylsulfanyl)propanoate + CO + formate + 2 H(+). The enzyme catalyses 1,2-dihydroxy-5-(methylsulfanyl)pent-1-en-3-one + O2 = 4-methylsulfanyl-2-oxobutanoate + formate + 2 H(+). It participates in amino-acid biosynthesis; L-methionine biosynthesis via salvage pathway; L-methionine from S-methyl-5-thio-alpha-D-ribose 1-phosphate: step 5/6. Catalyzes 2 different reactions between oxygen and the acireductone 1,2-dihydroxy-3-keto-5-methylthiopentene (DHK-MTPene) depending upon the metal bound in the active site. Fe-containing acireductone dioxygenase (Fe-ARD) produces formate and 2-keto-4-methylthiobutyrate (KMTB), the alpha-ketoacid precursor of methionine in the methionine recycle pathway. Ni-containing acireductone dioxygenase (Ni-ARD) produces methylthiopropionate, carbon monoxide and formate, and does not lie on the methionine recycle pathway. The sequence is that of Acireductone dioxygenase from Aquifex aeolicus (strain VF5).